The primary structure comprises 152 residues: Transcriptional repressor NrdR (152 aa).

The segment at cysteine 3–cysteine 34 is a zinc-finger region. In terms of domain architecture, ATP-cone spans isoleucine 48–glutamate 138.

The protein belongs to the NrdR family. It depends on Zn(2+) as a cofactor.

Functionally, negatively regulates transcription of bacterial ribonucleotide reductase nrd genes and operons by binding to NrdR-boxes. This chain is Transcriptional repressor NrdR, found in Chlamydia muridarum (strain MoPn / Nigg).